The sequence spans 608 residues: Glutamine--fructose-6-phosphate aminotransferase [isomerizing] (608 aa).

The Nucleophile; for GATase activity role is filled by Cys2. One can recognise a Glutamine amidotransferase type-2 domain in the interval 2–217 (CGIVGIVGHK…DGDWAVVGKT (216 aa)). SIS domains follow at residues 283-422 (TDID…ARGT) and 456-598 (LSRE…VDQP). The active-site For Fru-6P isomerization activity is the Lys603.

Its subcellular location is the cytoplasm. It catalyses the reaction D-fructose 6-phosphate + L-glutamine = D-glucosamine 6-phosphate + L-glutamate. Its function is as follows. Involved in the production of the root hair deformation (HAD) factor specifically on medicago. In Rhizobium leguminosarum bv. viciae, this protein is Glutamine--fructose-6-phosphate aminotransferase [isomerizing] (nodM).